Here is a 441-residue protein sequence, read N- to C-terminus: ATP-dependent protease ATPase subunit HslU (441 aa).

Residues I17, 60–65 (GVGKTE), D253, E319, and R391 contribute to the ATP site.

It belongs to the ClpX chaperone family. HslU subfamily. A double ring-shaped homohexamer of HslV is capped on each side by a ring-shaped HslU homohexamer. The assembly of the HslU/HslV complex is dependent on binding of ATP.

It is found in the cytoplasm. Its function is as follows. ATPase subunit of a proteasome-like degradation complex; this subunit has chaperone activity. The binding of ATP and its subsequent hydrolysis by HslU are essential for unfolding of protein substrates subsequently hydrolyzed by HslV. HslU recognizes the N-terminal part of its protein substrates and unfolds these before they are guided to HslV for hydrolysis. In Legionella pneumophila (strain Paris), this protein is ATP-dependent protease ATPase subunit HslU.